Here is an 85-residue protein sequence, read N- to C-terminus: Small ribosomal subunit protein bS18 (85 aa).

It belongs to the bacterial ribosomal protein bS18 family. In terms of assembly, part of the 30S ribosomal subunit. Forms a tight heterodimer with protein bS6.

In terms of biological role, binds as a heterodimer with protein bS6 to the central domain of the 16S rRNA, where it helps stabilize the platform of the 30S subunit. In Helicobacter acinonychis (strain Sheeba), this protein is Small ribosomal subunit protein bS18.